We begin with the raw amino-acid sequence, 741 residues long: uncharacterized protein (741 aa).

Polar residues predominate over residues 1–17; it reads MDSNTNENNSHASSNER. Positions 1 to 50 are disordered; that stretch reads MDSNTNENNSHASSNERQSSEGHDDYLNRNPNSEATEGEEGTHPTTGTQP. A compositionally biased stretch (basic and acidic residues) spans 18 to 27; it reads QSSEGHDDYL. Residues 107-150 form an RING-type 1; degenerate zinc finger; it reads CPICYDDMNENDEKQATKMPCGHIFGKNCLQKWLENHCTCPLCR. Polar residues-rich tracts occupy residues 177–193, 252–263, and 277–302; these read GNQG…SNGV, PDSNTSTPTTRS, and NASS…NAFF. 6 disordered regions span residues 177–214, 238–387, 500–543, 561–619, 638–688, and 713–741; these read GNQG…RTGV, SATN…NTNR, QPAV…PGIT, ENRM…TPTH, STPS…PQCQ, and RCQQ…EEHK. Residues 316–332 show a composition bias toward low complexity; it reads TSNLTSNSGSMTNSTST. 2 stretches are compositionally biased toward polar residues: residues 333 to 344 and 357 to 386; these read DLPTSNLPSQNA and PPNL…ANTN. Polar residues-rich tracts occupy residues 563 to 586, 604 to 619, and 652 to 661; these read RMNQ…SINV, ENSS…TPTH, and SKVSSGTSTP. The RING-type 2; degenerate zinc-finger motif lies at 687–736; that stretch reads CQLEDQGICDPNDRFVHFECGHSVHERCQQSTSNSENQMDEEIGECPKCR. A compositionally biased stretch (basic and acidic residues) spans 731 to 741; it reads ECPKCRNEEHK.

The protein resides in the nucleus. This is an uncharacterized protein from Schizosaccharomyces pombe (strain 972 / ATCC 24843) (Fission yeast).